Consider the following 141-residue polypeptide: MVHSQLPVAAPLRLLCALLLLPSATMIPGGLSPRSVTDPDVQKAAEFAVQEYNSLSTNAYYYKQLRIVEAQSQVVAGAKYYLTMELMKTKCAKATGKPKVYKEIQNCELPPKAQQEKLTCHFQVWSRPWLEKMELTKMSCN.

The first 26 residues, 1-26 (MVHSQLPVAAPLRLLCALLLLPSATM), serve as a signal peptide directing secretion. Positions 29–129 (GGLSPRSVTD…CHFQVWSRPW (101 aa)) constitute a Cystatin domain. The Secondary area of contact motif lies at 73–77 (QVVAG). 2 cysteine pairs are disulfide-bonded: Cys-91–Cys-107 and Cys-120–Cys-140.

This sequence belongs to the cystatin family. As to expression, expressed at a low level by the venom gland (at protein level).

It localises to the secreted. Its function is as follows. Inhibits various C1 cysteine proteases including cathepsin L, papain and cathepsin B. This protein has no toxic activity and its function in the venom is unknown. It may play a role as a housekeeping or regulatory protein. The protein is Cystatin of Pseudonaja textilis (Eastern brown snake).